The sequence spans 673 residues: Leucine zipper putative tumor suppressor 3 (673 aa).

Disordered regions lie at residues Met-1 to Pro-157, Phe-172 to Ala-239, and Ile-251 to Pro-317. Basic and acidic residues predominate over residues Ser-79–Gly-92. Polar residues predominate over residues His-173–Thr-186. The span at Gly-215–Ser-235 shows a compositional bias: low complexity. Residues Ser-258–Gly-269 show a composition bias toward gly residues. Residues Gly-274–Pro-294 are compositionally biased toward low complexity. Residues Gly-295–Leu-307 are compositionally biased toward gly residues. Phosphoserine is present on residues Ser-316 and Ser-318. Coiled-coil stretches lie at residues Pro-317 to Asp-496 and Arg-571 to Glu-639. The segment at Arg-635–Ile-673 is disordered. Over residues His-653 to Ile-673 the composition is skewed to basic and acidic residues.

Belongs to the LZTS3 family. In terms of assembly, interacts (via C-terminus) with SHANK3 (via PDZ domain). Interacts (via coiled coil) with SIPA1L1. Can form homooligomers.

It is found in the synapse. The protein localises to the postsynaptic density. It localises to the cell projection. Its subcellular location is the dendritic spine. The protein resides in the dendrite. It is found in the cytoplasm. The protein localises to the cytoskeleton. Its function is as follows. May be involved in promoting the maturation of dendritic spines, probably via regulating SIPA1L1 levels at the postsynaptic density of synapses. This Homo sapiens (Human) protein is Leucine zipper putative tumor suppressor 3.